The following is a 361-amino-acid chain: Protein RecA (361 aa).

Residue 77 to 84 (GPESSGKT) participates in ATP binding.

It belongs to the RecA family.

Its subcellular location is the cytoplasm. Its function is as follows. Can catalyze the hydrolysis of ATP in the presence of single-stranded DNA, the ATP-dependent uptake of single-stranded DNA by duplex DNA, and the ATP-dependent hybridization of homologous single-stranded DNAs. It interacts with LexA causing its activation and leading to its autocatalytic cleavage. The sequence is that of Protein RecA from Brucella anthropi (strain ATCC 49188 / DSM 6882 / CCUG 24695 / JCM 21032 / LMG 3331 / NBRC 15819 / NCTC 12168 / Alc 37) (Ochrobactrum anthropi).